The primary structure comprises 289 residues: BTB/POZ domain-containing protein KCTD7 (289 aa).

Residues 1-35 (MVVVTGREPDSRRQDGAMSSSDAEDDFLEPATPTA) form a disordered region. A BTB domain is found at 51–149 (EVVPLNIGGA…QLENMQPLKG (99 aa)).

Interacts with CUL3.

The protein resides in the cell membrane. It is found in the cytoplasm. Its subcellular location is the cytosol. May be involved in the control of excitability of cortical neurons. The protein is BTB/POZ domain-containing protein KCTD7 (KCTD7) of Homo sapiens (Human).